The chain runs to 460 residues: tRNA(Ile)-lysidine synthase (460 aa).

An ATP-binding site is contributed by 30-35 (SGGLDS).

The protein belongs to the tRNA(Ile)-lysidine synthase family.

The protein resides in the cytoplasm. The catalysed reaction is cytidine(34) in tRNA(Ile2) + L-lysine + ATP = lysidine(34) in tRNA(Ile2) + AMP + diphosphate + H(+). Ligates lysine onto the cytidine present at position 34 of the AUA codon-specific tRNA(Ile) that contains the anticodon CAU, in an ATP-dependent manner. Cytidine is converted to lysidine, thus changing the amino acid specificity of the tRNA from methionine to isoleucine. This Yersinia pestis protein is tRNA(Ile)-lysidine synthase.